Reading from the N-terminus, the 329-residue chain is Mas-related G-protein coupled receptor member X2 (329 aa).

Residues 1 to 33 (MDPTTPAWGTESTTMDGNDQSLPLLCDKEALIP) lie on the Extracellular side of the membrane. The helical transmembrane segment at 34–54 (VFLILFIALVGLVGNGFVLWL) threads the bilayer. Residues 55–63 (LGFRMSRNA) are Cytoplasmic-facing. Residues 64 to 84 (FSVYVLSLAGADFLFLCFQII) traverse the membrane as a helical segment. The Extracellular segment spans residues 85 to 96 (NCLVYLRDFFCS). The helical transmembrane segment at 97–117 (ISINFPSXFTTVMTCAYLAGL) threads the bilayer. Residues 118–144 (SMLSTISTERCLSVLWPIWYRCRRPRH) are Cytoplasmic-facing. The chain crosses the membrane as a helical span at residues 145-165 (LSAVVCVLLWALSLLLSILEG). The Extracellular portion of the chain corresponds to 166–184 (KFCGFLFSDGDFGWCQIFD). A helical membrane pass occupies residues 185–205 (FITAAWLIFLFVVLCASSLAL). Topologically, residues 206–228 (LVRILCGSRGLPLTRLYLTILLT) are cytoplasmic. Residues 229-249 (VLVFLLCGLPFGIQWFLILGF) form a helical membrane-spanning segment. The Extracellular segment spans residues 250–263 (WNSDVLLCHIHLVS). A helical membrane pass occupies residues 264 to 284 (VVLSSLNSSANPIIYFFVGSF). The Cytoplasmic segment spans residues 285–329 (RKQWRLQQPILKLAFQRALQDTAEVDHSEGCFPQGTSEMSRSSLV).

The protein belongs to the G-protein coupled receptor 1 family. Mas subfamily.

The protein resides in the cell membrane. Its function is as follows. Mast cell-specific receptor for basic secretagogues, i.e. cationic amphiphilic drugs, as well as endo- or exogenous peptides, consisting of a basic head group and a hydrophobic core. Recognizes and binds small molecules containing a cyclized tetrahydroisoquinoline (THIQ), such as non-steroidal neuromuscular blocking drugs (NMBDs), including tubocurarine and atracurium. In response to these compounds, mediates pseudo-allergic reactions characterized by histamine release, inflammation and airway contraction. This Hoolock hoolock (Western hoolock gibbon) protein is Mas-related G-protein coupled receptor member X2 (MRGPRX2).